The following is a 317-amino-acid chain: Transaldolase (317 aa).

Lys132 acts as the Schiff-base intermediate with substrate in catalysis.

Belongs to the transaldolase family. Type 1 subfamily. Homodimer.

The protein localises to the cytoplasm. It carries out the reaction D-sedoheptulose 7-phosphate + D-glyceraldehyde 3-phosphate = D-erythrose 4-phosphate + beta-D-fructose 6-phosphate. The protein operates within carbohydrate degradation; pentose phosphate pathway; D-glyceraldehyde 3-phosphate and beta-D-fructose 6-phosphate from D-ribose 5-phosphate and D-xylulose 5-phosphate (non-oxidative stage): step 2/3. Its function is as follows. Transaldolase is important for the balance of metabolites in the pentose-phosphate pathway. The protein is Transaldolase of Yersinia enterocolitica serotype O:8 / biotype 1B (strain NCTC 13174 / 8081).